We begin with the raw amino-acid sequence, 167 residues long: Phosphopantetheine adenylyltransferase (167 aa).

T9 serves as a coordination point for substrate. Residues 9 to 10 (TF) and H17 each bind ATP. Positions 41, 73, and 87 each coordinate substrate. Residues 88-90 (GLR), E98, and 123-129 (NSYISST) contribute to the ATP site.

Belongs to the bacterial CoaD family. Homohexamer. Requires Mg(2+) as cofactor.

It is found in the cytoplasm. The enzyme catalyses (R)-4'-phosphopantetheine + ATP + H(+) = 3'-dephospho-CoA + diphosphate. It participates in cofactor biosynthesis; coenzyme A biosynthesis; CoA from (R)-pantothenate: step 4/5. Reversibly transfers an adenylyl group from ATP to 4'-phosphopantetheine, yielding dephospho-CoA (dPCoA) and pyrophosphate. In Chromohalobacter salexigens (strain ATCC BAA-138 / DSM 3043 / CIP 106854 / NCIMB 13768 / 1H11), this protein is Phosphopantetheine adenylyltransferase.